The sequence spans 132 residues: Holo-[acyl-carrier-protein] synthase (132 aa).

The Mg(2+) site is built by Asp8 and Glu62.

It belongs to the P-Pant transferase superfamily. AcpS family. Requires Mg(2+) as cofactor.

Its subcellular location is the cytoplasm. It carries out the reaction apo-[ACP] + CoA = holo-[ACP] + adenosine 3',5'-bisphosphate + H(+). In terms of biological role, transfers the 4'-phosphopantetheine moiety from coenzyme A to a Ser of acyl-carrier-protein. This chain is Holo-[acyl-carrier-protein] synthase, found in Methylibium petroleiphilum (strain ATCC BAA-1232 / LMG 22953 / PM1).